The following is a 380-amino-acid chain: Endo-chitosanase C (380 aa).

The signal sequence occupies residues 1–22; the sequence is MPIKSFASRLALSLAICGTAMG. An R3-1 repeat occupies 276-304; that stretch reads CSWPGHCAGATCSSNDDCSDDLTCQNGKC. The R3-2 repeat unit spans residues 311 to 341; the sequence is ETCSWEGHCKGATCSSNDDCSDELACISGIC. The R3-3 repeat unit spans residues 348–378; that stretch reads ETCEWEGHCEGASCSSHDDCDGNLACKNGKC.

It belongs to the glycosyl hydrolase 75 family.

The protein localises to the secreted. It carries out the reaction Endohydrolysis of beta-(1-&gt;4)-linkages between D-glucosamine residues in a partly acetylated chitosan.. Its function is as follows. Chitosanase catalyzing the endo-type cleavage of chitosan, the deacylated form of chitin. Chitosanase may be crucial in the degradation of the deacetylated portion of chitin in the fungal cell wall. Chitoolisaccharides produced by the hydrolysis of partially N-acetylated chitosan are known to have many biological activities, including antibacterial activity, immune-enhancing effects, and elicitor activity. This chain is Endo-chitosanase C (csnC), found in Aspergillus oryzae (Yellow koji mold).